A 309-amino-acid chain; its full sequence is Probable manganese-dependent inorganic pyrophosphatase (309 aa).

Mn(2+) is bound by residues His-9, Asp-13, Asp-15, Asp-75, His-97, and Asp-149.

The protein belongs to the PPase class C family. The cofactor is Mn(2+).

It localises to the cytoplasm. It carries out the reaction diphosphate + H2O = 2 phosphate + H(+). The polypeptide is Probable manganese-dependent inorganic pyrophosphatase (Bacillus licheniformis (strain ATCC 14580 / DSM 13 / JCM 2505 / CCUG 7422 / NBRC 12200 / NCIMB 9375 / NCTC 10341 / NRRL NRS-1264 / Gibson 46)).